Here is a 370-residue protein sequence, read N- to C-terminus: Protein phosphatase 2C homolog 2 (370 aa).

One can recognise a PPM-type phosphatase domain in the interval 23-291; sequence HFGVSHMQGW…DNMTICIVAF (269 aa). 4 residues coordinate Mn(2+): Asp-63, Gly-64, Asp-233, and Asp-282. Ser-355 and Ser-357 each carry phosphoserine.

The protein belongs to the PP2C family. In terms of assembly, monomer. Mg(2+) is required as a cofactor. The cofactor is Mn(2+).

It is found in the nucleus. The protein localises to the cytoplasm. It localises to the cytosol. The catalysed reaction is O-phospho-L-seryl-[protein] + H2O = L-seryl-[protein] + phosphate. The enzyme catalyses O-phospho-L-threonyl-[protein] + H2O = L-threonyl-[protein] + phosphate. Activity is reduced when phosphosrylated at Ser-355/Ser-357. Functionally, dephosphorylating regulator for many key proteins. Has an important role in osmotic stability and cell shape control. It may negatively regulate the osmosensing signal transmitted through wis1 map kinase. The chain is Protein phosphatase 2C homolog 2 (ptc2) from Schizosaccharomyces pombe (strain 972 / ATCC 24843) (Fission yeast).